We begin with the raw amino-acid sequence, 164 residues long: Succinate dehydrogenase assembly factor 2, mitochondrial (164 aa).

A mitochondrion-targeting transit peptide spans 1 to 27; it reads MAVVTLIPTLARVLSKHSLLSPLLSVT.

Belongs to the SDHAF2 family. In terms of assembly, interacts with SDHA within the SDH catalytic dimer.

Its subcellular location is the mitochondrion matrix. Plays an essential role in the assembly of succinate dehydrogenase (SDH), an enzyme complex (also referred to as respiratory complex II) that is a component of both the tricarboxylic acid (TCA) cycle and the mitochondrial electron transport chain, and which couples the oxidation of succinate to fumarate with the reduction of ubiquinone (coenzyme Q) to ubiquinol. Required for flavinylation (covalent attachment of FAD) of the flavoprotein subunit SDHA of the SDH catalytic dimer. In Rattus norvegicus (Rat), this protein is Succinate dehydrogenase assembly factor 2, mitochondrial.